The chain runs to 422 residues: Serine hydroxymethyltransferase (422 aa).

Residues Leu121 and 125 to 127 contribute to the (6S)-5,6,7,8-tetrahydrofolate site; that span reads GHL. Position 230 is an N6-(pyridoxal phosphate)lysine (Lys230). 355–357 serves as a coordination point for (6S)-5,6,7,8-tetrahydrofolate; sequence SPF.

The protein belongs to the SHMT family. Homodimer. Pyridoxal 5'-phosphate serves as cofactor.

Its subcellular location is the cytoplasm. The enzyme catalyses (6R)-5,10-methylene-5,6,7,8-tetrahydrofolate + glycine + H2O = (6S)-5,6,7,8-tetrahydrofolate + L-serine. The protein operates within one-carbon metabolism; tetrahydrofolate interconversion. Its pathway is amino-acid biosynthesis; glycine biosynthesis; glycine from L-serine: step 1/1. Functionally, catalyzes the reversible interconversion of serine and glycine with tetrahydrofolate (THF) serving as the one-carbon carrier. This reaction serves as the major source of one-carbon groups required for the biosynthesis of purines, thymidylate, methionine, and other important biomolecules. Also exhibits THF-independent aldolase activity toward beta-hydroxyamino acids, producing glycine and aldehydes, via a retro-aldol mechanism. In Teredinibacter turnerae (strain ATCC 39867 / T7901), this protein is Serine hydroxymethyltransferase.